Reading from the N-terminus, the 116-residue chain is Large ribosomal subunit protein uL18 (116 aa).

This sequence belongs to the universal ribosomal protein uL18 family. Part of the 50S ribosomal subunit; part of the 5S rRNA/L5/L18/L25 subcomplex. Contacts the 5S and 23S rRNAs.

This is one of the proteins that bind and probably mediate the attachment of the 5S RNA into the large ribosomal subunit, where it forms part of the central protuberance. This is Large ribosomal subunit protein uL18 from Pseudomonas aeruginosa (strain UCBPP-PA14).